Here is a 291-residue protein sequence, read N- to C-terminus: 4-diphosphocytidyl-2-C-methyl-D-erythritol kinase (291 aa).

The active site involves K21. Position 104–114 (104–114 (PMGGGLGGGSS)) interacts with ATP. The active site involves D146.

This sequence belongs to the GHMP kinase family. IspE subfamily.

It carries out the reaction 4-CDP-2-C-methyl-D-erythritol + ATP = 4-CDP-2-C-methyl-D-erythritol 2-phosphate + ADP + H(+). Its pathway is isoprenoid biosynthesis; isopentenyl diphosphate biosynthesis via DXP pathway; isopentenyl diphosphate from 1-deoxy-D-xylulose 5-phosphate: step 3/6. Functionally, catalyzes the phosphorylation of the position 2 hydroxy group of 4-diphosphocytidyl-2C-methyl-D-erythritol. The chain is 4-diphosphocytidyl-2-C-methyl-D-erythritol kinase from Methylococcus capsulatus (strain ATCC 33009 / NCIMB 11132 / Bath).